A 238-amino-acid polypeptide reads, in one-letter code: Pyridoxine 5'-phosphate synthase (238 aa).

N7 provides a ligand contact to 3-amino-2-oxopropyl phosphate. 9–10 (DH) is a binding site for 1-deoxy-D-xylulose 5-phosphate. R18 provides a ligand contact to 3-amino-2-oxopropyl phosphate. H43 acts as the Proton acceptor in catalysis. 2 residues coordinate 1-deoxy-D-xylulose 5-phosphate: R45 and H50. The Proton acceptor role is filled by E70. T100 contacts 1-deoxy-D-xylulose 5-phosphate. H190 (proton donor) is an active-site residue. Residues G191 and 212 to 213 (GH) contribute to the 3-amino-2-oxopropyl phosphate site.

The protein belongs to the PNP synthase family. As to quaternary structure, homooctamer; tetramer of dimers.

Its subcellular location is the cytoplasm. The catalysed reaction is 3-amino-2-oxopropyl phosphate + 1-deoxy-D-xylulose 5-phosphate = pyridoxine 5'-phosphate + phosphate + 2 H2O + H(+). It participates in cofactor biosynthesis; pyridoxine 5'-phosphate biosynthesis; pyridoxine 5'-phosphate from D-erythrose 4-phosphate: step 5/5. Catalyzes the complicated ring closure reaction between the two acyclic compounds 1-deoxy-D-xylulose-5-phosphate (DXP) and 3-amino-2-oxopropyl phosphate (1-amino-acetone-3-phosphate or AAP) to form pyridoxine 5'-phosphate (PNP) and inorganic phosphate. This Prochlorococcus marinus (strain AS9601) protein is Pyridoxine 5'-phosphate synthase.